The primary structure comprises 154 residues: MSKTDVSGLSQLGRQVDAPTSPETAVLERVPNTNAGTDYVVRFTAPEFTSLCPMTGQPDFAHIVIDYIPGDFLVESKSLKLFMTSFRNHGSFHEDCSIYIAKRLVDLLDPKWLRIGAYWYPRGGIPIDVFWQTGEVPKGVWLPDQGVPTYRGRG.

A compositionally biased stretch (polar residues) spans 1 to 13 (MSKTDVSGLSQLG). Positions 1–24 (MSKTDVSGLSQLGRQVDAPTSPET) are disordered. Catalysis depends on Cys-52, which acts as the Thioimide intermediate. The active-site Proton donor is the Asp-59. Substrate is bound by residues 74–76 (VES) and 93–94 (HE).

It belongs to the GTP cyclohydrolase I family. QueF type 1 subfamily.

It is found in the cytoplasm. It catalyses the reaction 7-aminomethyl-7-carbaguanine + 2 NADP(+) = 7-cyano-7-deazaguanine + 2 NADPH + 3 H(+). It functions in the pathway tRNA modification; tRNA-queuosine biosynthesis. In terms of biological role, catalyzes the NADPH-dependent reduction of 7-cyano-7-deazaguanine (preQ0) to 7-aminomethyl-7-deazaguanine (preQ1). The polypeptide is NADPH-dependent 7-cyano-7-deazaguanine reductase (Allorhizobium ampelinum (strain ATCC BAA-846 / DSM 112012 / S4) (Agrobacterium vitis (strain S4))).